Reading from the N-terminus, the 553-residue chain is Mucolipin-3 (553 aa).

Topologically, residues 1 to 62 (MANPEVLVSS…FWARGRKPWK (62 aa)) are cytoplasmic. Positions 52–62 (KFWARGRKPWK) are interaction with phosphoinositides. A helical transmembrane segment spans residues 63–83 (LAIQILKIAMVTIQLVLFGLS). Topologically, residues 84-283 (NQMVVAFKEE…VSGSIQKNTH (200 aa)) are extracellular. Residues 104–118 (KGYMDRMDDTYAVYT) are extracellular/lumenal pore loop. N-linked (GlcNAc...) asparagine glycosylation occurs at Asn138. A disulfide bridge connects residues Cys159 and Cys185. N-linked (GlcNAc...) asparagine glycosylation occurs at Asn205. A disulfide bridge links Cys238 with Cys269. The helical transmembrane segment at 284 to 304 (YMMIFDAFVILTCLASLVLCA) threads the bilayer. The Cytoplasmic portion of the chain corresponds to 305-341 (RSVIRGLQLQQEFVNFFLLHYKKEVSASDQMEFINGW). Residues 342 to 362 (YIMIIISDILTIVGSVLKMEI) traverse the membrane as a helical segment. The Extracellular segment spans residues 363 to 371 (QAKSLTSYD). Residues 372–392 (VCSILLGTSTMLVWLGVIRYL) traverse the membrane as a helical segment. The Cytoplasmic segment spans residues 393–414 (GFFAKYNLLILTLQAALPNVMR). A helical membrane pass occupies residues 415–435 (FCCCAAMIYLGYCFCGWIVLG). Residues 436-443 (PYHEKFRS) are Extracellular-facing. The segment at residues 444–464 (LNRVSECLFSLINGDDMFSTF) is an intramembrane region (pore-forming). Positions 456 to 459 (NGDD) match the Selectivity filter motif. The Extracellular portion of the chain corresponds to 465–475 (AKMQQKSYLVW). The helical transmembrane segment at 476 to 497 (LFSRVYLYSFISLFIYMILSLF) threads the bilayer. The Cytoplasmic portion of the chain corresponds to 498-553 (IALITDTYETIKHYQQDGFPETELRKFIAECKDLPNSGKYRLEDDPPGSLLCCCKK).

The protein belongs to the transient receptor (TC 1.A.4) family. Polycystin subfamily. MCOLN3 sub-subfamily. Homotetramer. Can heterooligomerize with MCOLN1; heteromeric assemblies have different channel properties as compared to the respective homooligomers and may be tissue-specific. May heterooligomerize with TRPV5 to form a functional distinct ion channel. Interacts with GABARAPL2. N-glycosylated. In terms of tissue distribution, expressed in the cochlea; particularly in the inner and outer hair cells (at protein level).

The protein localises to the early endosome membrane. The protein resides in the late endosome membrane. It is found in the cytoplasmic vesicle. Its subcellular location is the autophagosome membrane. It localises to the cell projection. The protein localises to the stereocilium membrane. It carries out the reaction Ca(2+)(in) = Ca(2+)(out). It catalyses the reaction Mg(2+)(in) = Mg(2+)(out). The catalysed reaction is K(+)(in) = K(+)(out). The enzyme catalyses Na(+)(in) = Na(+)(out). With respect to regulation, channel activity is activated by PtdIns(3,5)P2 (phosphatidylinositol 3,5-bisphosphate). Inhibited by lumenal H(+) and Na(+). The channel pore shows dynamic behavior and undergoes spontaneous, Ca(2+)-dependent modulation when conducting Ca(2+). Nonselective cation channel probably playing a role in the regulation of membrane trafficking events. Acts as a Ca(2+)-permeable cation channel with inwardly rectifying activity. Mediates release of Ca(2+) from endosomes to the cytoplasm, contributes to endosomal acidification and is involved in the regulation of membrane trafficking and fusion in the endosomal pathway. Also permeable to Mg(2+), Na(+) and K(+). Does not seem to act as mechanosensory transduction channel in inner ear sensory hair cells. Proposed to play a critical role at the cochlear stereocilia ankle-link region during hair-bundle growth. Involved in the regulation of autophagy. Through association with GABARAPL2 may be involved in autophagosome formation possibly providing Ca(2+) for the fusion process. Through a possible and probably tissue-specific heteromerization with MCOLN1 may be at least in part involved in many lysosome-dependent cellular events. Possible heteromeric ion channel assemblies with TRPV5 show pharmacological similarity with TRPML3. In Mus musculus (Mouse), this protein is Mucolipin-3 (Mcoln3).